Consider the following 659-residue polypeptide: MRGFASSASRIATAAAASKSLNASTSVNPKLSKTLNSSGKPTNPLNQRYISQVIERKDWFLILNQEFTTHRIGLNTRFVISVLQNQDNPLHSLRFYLWVSNFDPVYAKDQSLKSVLGNALFRKGPLLLSMELLKEIRDSGYRISDELMCVLIGSWGRLGLAKYCNDVFAQISFLGMKPSTRLYNAVIDALVKSNSLDLAYLKFQQMRSDGCKPDRFTYNILIHGVCKKGVVDEAIRLVKQMEQEGNRPNVFTYTILIDGFLIAGRVDEALKQLEMMRVRKLNPNEATIRTFVHGIFRCLPPCKAFEVLVGFMEKDSNLQRVGYDAVLYCLSNNSMAKETGQFLRKIGERGYIPDSSTFNAAMSCLLKGHDLVETCRIFDGFVSRGVKPGFNGYLVLVQALLNAQRFSEGDRYLKQMGVDGLLSSVYSYNAVIDCLCKARRIENAAMFLTEMQDRGISPNLVTFNTFLSGYSVRGDVKKVHGVLEKLLVHGFKPDVITFSLIINCLCRAKEIKDAFDCFKEMLEWGIEPNEITYNILIRSCCSTGDTDRSVKLFAKMKENGLSPDLYAYNATIQSFCKMRKVKKAEELLKTMLRIGLKPDNFTYSTLIKALSESGRESEAREMFSSIERHGCVPDSYTKRLVEELDLRKSGLSRETVSAS.

The transit peptide at 1 to 32 directs the protein to the mitochondrion; that stretch reads MRGFASSASRIATAAAASKSLNASTSVNPKLS. PPR repeat units follow at residues 109-143, 144-178, 179-213, 214-248, 249-283, 284-318, 319-353, 354-388, 389-423, 424-458, 459-493, 494-528, 529-563, 564-598, and 599-633; these read DQSL…GYRI, SDEL…GMKP, STRL…GCKP, DRFT…GNRP, NVFT…KLNP, NEAT…DSNL, QRVG…GYIP, DSST…GVKP, GFNG…GLLS, SVYS…GISP, NLVT…GFKP, DVIT…GIEP, NEIT…GLSP, DLYA…GLKP, and DNFT…GCVP.

It belongs to the PPR family. P subfamily.

It is found in the mitochondrion. Required for the ubiquinol-cytochrome c oxidoreductase activity of mitochondrial complex III. In Arabidopsis thaliana (Mouse-ear cress), this protein is Putative pentatricopeptide repeat-containing protein At3g16890, mitochondrial (PPR40).